The chain runs to 203 residues: Putative GPI-anchored protein YHR214W (203 aa).

An N-terminal signal peptide occupies residues 1–23 (MFNRFNKFQAAVALALLSRGALG). N-linked (GlcNAc...) asparagine glycans are attached at residues Asn28 and Asn138. Asn184 carries the GPI-anchor amidated asparagine lipid modification. Positions 185-203 (AGTFSLSNAILNGGSVSGL) are cleaved as a propeptide — removed in mature form.

It is found in the cell membrane. This Saccharomyces cerevisiae (strain ATCC 204508 / S288c) (Baker's yeast) protein is Putative GPI-anchored protein YHR214W.